A 911-amino-acid polypeptide reads, in one-letter code: Isoleucine--tRNA ligase (911 aa).

The short motif at 57-67 (PYANGDIHMGH) is the 'HIGH' region element. Glutamate 551 lines the L-isoleucyl-5'-AMP pocket. The short motif at 592–596 (KMSKS) is the 'KMSKS' region element. Residue lysine 595 participates in ATP binding. Zn(2+)-binding residues include cysteine 881, cysteine 884, cysteine 901, and cysteine 904.

Belongs to the class-I aminoacyl-tRNA synthetase family. IleS type 1 subfamily. In terms of assembly, monomer. Zn(2+) is required as a cofactor.

The protein localises to the cytoplasm. It carries out the reaction tRNA(Ile) + L-isoleucine + ATP = L-isoleucyl-tRNA(Ile) + AMP + diphosphate. Functionally, catalyzes the attachment of isoleucine to tRNA(Ile). As IleRS can inadvertently accommodate and process structurally similar amino acids such as valine, to avoid such errors it has two additional distinct tRNA(Ile)-dependent editing activities. One activity is designated as 'pretransfer' editing and involves the hydrolysis of activated Val-AMP. The other activity is designated 'posttransfer' editing and involves deacylation of mischarged Val-tRNA(Ile). In Exiguobacterium sibiricum (strain DSM 17290 / CCUG 55495 / CIP 109462 / JCM 13490 / 255-15), this protein is Isoleucine--tRNA ligase.